Reading from the N-terminus, the 609-residue chain is Phosphoenolpyruvate carboxykinase [GTP] (609 aa).

Substrate is bound by residues Arg81 and 220–222 (YGG). Positions 229 and 249 each coordinate Mn(2+). Residue Ser271 participates in substrate binding. GTP is bound at residue 272–277 (ACGKTN). Residue Cys273 is part of the active site. Asp296 lines the Mn(2+) pocket. 387–389 (NSR) provides a ligand contact to substrate. GTP is bound by residues Arg389, Arg420, and 515–518 (FGEN).

It belongs to the phosphoenolpyruvate carboxykinase [GTP] family. Monomer. Requires Mn(2+) as cofactor.

Its subcellular location is the cytoplasm. The enzyme catalyses oxaloacetate + GTP = phosphoenolpyruvate + GDP + CO2. The protein operates within carbohydrate biosynthesis; gluconeogenesis. Functionally, catalyzes the conversion of oxaloacetate (OAA) to phosphoenolpyruvate (PEP), the rate-limiting step in the metabolic pathway that produces glucose from lactate and other precursors derived from the citric acid cycle. This chain is Phosphoenolpyruvate carboxykinase [GTP], found in Mycobacterium marinum (strain ATCC BAA-535 / M).